The following is a 163-amino-acid chain: NADH-quinone oxidoreductase subunit I 1 (163 aa).

4Fe-4S ferredoxin-type domains are found at residues 53–83 (LRRY…IEAG) and 94–123 (VRYD…EGPN). Residues cysteine 63, cysteine 66, cysteine 69, cysteine 73, cysteine 103, cysteine 106, cysteine 109, and cysteine 113 each coordinate [4Fe-4S] cluster.

The protein belongs to the complex I 23 kDa subunit family. In terms of assembly, NDH-1 is composed of 14 different subunits. Subunits NuoA, H, J, K, L, M, N constitute the membrane sector of the complex. [4Fe-4S] cluster is required as a cofactor.

The protein resides in the cell inner membrane. It catalyses the reaction a quinone + NADH + 5 H(+)(in) = a quinol + NAD(+) + 4 H(+)(out). Its function is as follows. NDH-1 shuttles electrons from NADH, via FMN and iron-sulfur (Fe-S) centers, to quinones in the respiratory chain. The immediate electron acceptor for the enzyme in this species is believed to be ubiquinone. Couples the redox reaction to proton translocation (for every two electrons transferred, four hydrogen ions are translocated across the cytoplasmic membrane), and thus conserves the redox energy in a proton gradient. The protein is NADH-quinone oxidoreductase subunit I 1 of Rhizobium etli (strain ATCC 51251 / DSM 11541 / JCM 21823 / NBRC 15573 / CFN 42).